The sequence spans 433 residues: Tol-Pal system protein TolB (433 aa).

An N-terminal signal peptide occupies residues 1-21 (MIKRLRGLLVMLCCVAGMAVA).

Belongs to the TolB family. In terms of assembly, the Tol-Pal system is composed of five core proteins: the inner membrane proteins TolA, TolQ and TolR, the periplasmic protein TolB and the outer membrane protein Pal. They form a network linking the inner and outer membranes and the peptidoglycan layer.

The protein localises to the periplasm. In terms of biological role, part of the Tol-Pal system, which plays a role in outer membrane invagination during cell division and is important for maintaining outer membrane integrity. The sequence is that of Tol-Pal system protein TolB from Pseudomonas putida (strain ATCC 47054 / DSM 6125 / CFBP 8728 / NCIMB 11950 / KT2440).